The chain runs to 438 residues: Putative formin-like protein 21a (438 aa).

The disordered stretch occupies residues 1–74 (MSPVEISGAD…RVLPRPPPPP (74 aa)). Positions 22-61 (PLPPPPPPPPPPMRRRAPLPPPPPPPMRRRAPLPPPPPPA) are enriched in pro residues. The 315-residue stretch at 124-438 (FPCPSKKKSS…SYGYFDQPWI (315 aa)) folds into the FH2 domain.

This sequence belongs to the formin-like family. Class-II subfamily.

This chain is Putative formin-like protein 21a (FH21A), found in Arabidopsis thaliana (Mouse-ear cress).